A 100-amino-acid chain; its full sequence is MHLQPKDQEKLLVVVAADLARRRQARGLKLNHPEAIAIITYELLEGARDGRTVAELMSWGSTILSREDVMEGVPEMIPDVQVEATFPDGTKLVTVHDPIR.

It belongs to the urease gamma subunit family. Heterotrimer of UreA (gamma), UreB (beta) and UreC (alpha) subunits. Three heterotrimers associate to form the active enzyme.

It is found in the cytoplasm. It carries out the reaction urea + 2 H2O + H(+) = hydrogencarbonate + 2 NH4(+). The protein operates within nitrogen metabolism; urea degradation; CO(2) and NH(3) from urea (urease route): step 1/1. This is Urease subunit gamma from Kocuria rhizophila (strain ATCC 9341 / DSM 348 / NBRC 103217 / DC2201).